A 523-amino-acid polypeptide reads, in one-letter code: Solute carrier family 2, facilitated glucose transporter member 2 (523 aa).

The Cytoplasmic portion of the chain corresponds to 1–10 (MSEDKITGTL). Residues 11–31 (AFTVFTAVLSSFQFGYDIGVI) traverse the membrane as a helical segment. Residues 32-97 (NAPQEVIISH…SAHIVTMLWS (66 aa)) lie on the Extracellular side of the membrane. N-linked (GlcNAc...) asparagine glycosylation is present at Asn62. A helical membrane pass occupies residues 98–118 (LSVSSFAVGGMVASFFGGWLG). Residues 119–126 (DKLGRIKA) lie on the Cytoplasmic side of the membrane. The chain crosses the membrane as a helical span at residues 127–147 (MLAANSLSLTGALLMGCSKFG). Residues 148-157 (PAHALIIAGR) are Extracellular-facing. The chain crosses the membrane as a helical span at residues 158–178 (SVSGLYCGLISGLVPMYIGEI). The Cytoplasmic segment spans residues 179–186 (APTTLRGA). The chain crosses the membrane as a helical span at residues 187 to 207 (LGTLHQLALVTGILISQIAGL). Gln192 lines the D-glucose pocket. Topologically, residues 208 to 216 (SFILGNQDH) are extracellular. The chain crosses the membrane as a helical span at residues 217-237 (WHILLGLSAVPALLQCLLLLF). Over 238–302 (CPESPRYLYI…LFTDANYRQP (65 aa)) the chain is Cytoplasmic. Residues 303-323 (ILVALMLHMAQQFSGINGIFY) traverse the membrane as a helical segment. D-glucose contacts are provided by residues 313–314 (QQ) and Asn319. Over 324–337 (YSTSIFQTAGISQP) the chain is Extracellular. Residues 338–358 (VYATIGVGAINMIFTAVSVLL) form a helical membrane-spanning segment. Asn348 provides a ligand contact to D-glucose. Over 359–367 (VEKAGRRTL) the chain is Cytoplasmic. A helical membrane pass occupies residues 368–388 (FLTGMIGMFFCTIFMSVGLVL). The Extracellular portion of the chain corresponds to 389–401 (LDKFAWMSYVSMT). Residues 402–422 (AIFLFVSFFEIGPGPIPWFMV) traverse the membrane as a helical segment. Residues Glu411 and Trp419 each contribute to the D-glucose site. Topologically, residues 423 to 432 (AEFFSQGPRP) are cytoplasmic. The chain crosses the membrane as a helical span at residues 433–453 (TALALAAFSNWVCNFVIALCF). Residues 454–460 (QYIADFL) are Extracellular-facing. Residues 461-481 (GPYVFFLFAGVVLVFTLFTFF) traverse the membrane as a helical segment. The Cytoplasmic segment spans residues 482-523 (KVPETKGKSFEEIAAEFRKKSGSAPPRKAAVQMEFLASSESV). Residue Ser522 is modified to Phosphoserine.

Belongs to the major facilitator superfamily. Sugar transporter (TC 2.A.1.1) family. Glucose transporter subfamily. Post-translationally, N-glycosylated; required for stability and retention at the cell surface of pancreatic beta cells. As to expression, in embryo, expressed in endoderm layer of yolk sac and liver primordium.

It is found in the cell membrane. The catalysed reaction is D-glucose(out) = D-glucose(in). It carries out the reaction D-fructose(out) = D-fructose(in). It catalyses the reaction L-dehydroascorbate(out) = L-dehydroascorbate(in). The enzyme catalyses D-galactose(in) = D-galactose(out). Its activity is regulated as follows. D-glucose and maltose competitively inhibit fructose transport. D-glucose, D-fructose and maltose inhibit deoxyglucose transport. Facilitative hexose transporter that mediates the transport of glucose, fructose and galactose. Likely mediates the bidirectional transfer of glucose across the plasma membrane of hepatocytes and is responsible for uptake of glucose by the beta cells; may comprise part of the glucose-sensing mechanism of the beta cell. May also participate with the Na(+)/glucose cotransporter in the transcellular transport of glucose in the small intestine and kidney. Also able to mediate the transport of dehydroascorbate. This is Solute carrier family 2, facilitated glucose transporter member 2 from Mus musculus (Mouse).